A 126-amino-acid polypeptide reads, in one-letter code: Adenosine 5'-monophosphoramidase HINT1 (126 aa).

N-acetylalanine is present on A2. The HIT domain maps to 18 to 126 (IFGKIIRKEI…GGRQMNWPPG (109 aa)). N6-acetyllysine is present on residues K21 and K30. 43–44 (DI) lines the AMP pocket. A phosphoserine mark is found at S45 and S72. Residues N99, 105–107 (GQS), and 112–114 (HLH) contribute to the AMP site. The short motif at 110-114 (HIHLH) is the Histidine triad motif element. Residue H112 is the Tele-AMP-histidine intermediate of the active site.

It belongs to the HINT family. In terms of assembly, homodimer. Interacts with CDK7. Interacts with RUVBL1 and RUVBL2 and is associated with the LEF1/TCF1-CTNNB1 complex and with a KAT5 histone acetyltransferase complex. Identified in a complex with MITF and CTNNB1. Interacts with CDC34 and RBX1, and is part of a SCF (SKP2-CUL1-F-box protein) E3 ubiquitin-protein ligase complex. Interacts with SUMO1, SUMO2 and RGS17. Interacts with the Ten-1 ICD form of TENM1. Interacts with CALM1; interaction increases in the presence of calcium ions.

The protein resides in the cytoplasm. It is found in the nucleus. The enzyme catalyses adenosine 5'-phosphoramidate + H2O = AMP + NH4(+). Functionally, exhibits adenosine 5'-monophosphoramidase activity, hydrolyzing purine nucleotide phosphoramidates with a single phosphate group such as adenosine 5'monophosphoramidate (AMP-NH2) to yield AMP and NH2. Hydrolyzes adenosine 5'monophosphomorpholidate (AMP-morpholidate) and guanosine 5'monophosphomorpholidate (GMP-morpholidate). Hydrolyzes lysyl-AMP (AMP-N-epsilon-(N-alpha-acetyl lysine methyl ester)) generated by lysine tRNA ligase, as well as Met-AMP, His-AMP and Asp-AMP, lysyl-GMP (GMP-N-epsilon-(N-alpha-acetyl lysine methyl ester)) and AMP-N-alanine methyl ester. Can also convert adenosine 5'-O-phosphorothioate and guanosine 5'-O-phosphorothioate to the corresponding nucleoside 5'-O-phosphates with concomitant release of hydrogen sulfide. In addition, functions as a scaffolding protein that modulates transcriptional activation by the LEF1/TCF1-CTNNB1 complex and by the complex formed with MITF and CTNNB1. Modulates p53/TP53 levels and p53/TP53-mediated apoptosis. Modulates proteasomal degradation of target proteins by the SCF (SKP2-CUL1-F-box protein) E3 ubiquitin-protein ligase complex. Also exhibits SUMO-specific isopeptidase activity, deconjugating SUMO1 from RANGAP1 and RGS17. The sequence is that of Adenosine 5'-monophosphoramidase HINT1 (Hint1) from Rattus norvegicus (Rat).